A 527-amino-acid polypeptide reads, in one-letter code: Triostin synthetase I (527 aa).

Glycine 187–glycine 188 lines the ATP pocket. Histidine 230–glutamine 231 lines the substrate pocket. ATP-binding positions include serine 300–proline 302, aspartate 406, arginine 421, and lysine 512. Lysine 512 contributes to the substrate binding site.

Belongs to the ATP-dependent AMP-binding enzyme family. Monomer.

Its function is as follows. Involved in triostin biosynthesis. Activates quinoxaline-2-carboxylic acid (QA) via catalysis of the ATP-pyrophosphate exchange reaction dependent on QA, and the formation of the corresponding adenylate. Also activates structural analogs of QA such as quinoline-2-carboxylic acid and thieno[3,2-b]pyridine-5-carboxylic acid, but not quinoline-3-carboxylic acid, quinoline-4-carboxylic acid, pyridine-2-carboxylic acid or 2-pyrazinecarboxylic acid. The polypeptide is Triostin synthetase I (trsA) (Streptomyces triostinicus).